Reading from the N-terminus, the 243-residue chain is Probable fructoselysine utilization operon transcriptional repressor (243 aa).

Residues 10-78 (QLLYATVRQR…QGKGTFVQSQ (69 aa)) form the HTH gntR-type domain. Positions 38–57 (ENELCTQYNVSRITIRKAIS) form a DNA-binding region, H-T-H motif.

The protein operates within carbohydrate metabolism; fructoselysine degradation [regulation]. Functionally, may regulate the transcription of the frlABCDR operon, involved in the utilization of fructoselysine and psicoselysine. The polypeptide is Probable fructoselysine utilization operon transcriptional repressor (Escherichia coli (strain K12)).